The primary structure comprises 394 residues: MPPKASKKDAAPAERPILGRFSSHLKIGIVGLPNVGKSTFFNIVTKLSIPAENFPFCTIDPNEARVYVPDERFDWLCQLYKPKSEVSAYLEINDIAGLVRGAHAGEGLGNAFLSHIRAVDGIFHVLRAFEDKEVTHIDDSVDPVRDLETIGEELRLKDIEFVQNKIDDLEKSMKRSNDKQLKLEHELCEKVKAHLEDGKDVRFGDWKSADIEILNTFQLLTAKPVVYLVNMSEKDYQRKKNKFLPKIHAWVQEHGGETIIPFSCAFERLLADMPPDEAAKYCAENQIASVIPKIIKTGFAAIHLIYFFTAGPDEVKCWQIRRQTKAPQAAGTIHTDFERGFICAEVMKFDDLKELGSESAVKAAGKYRQEGKTYVVQDGDIIFFKFNVSGGGKK.

One can recognise an OBG-type G domain in the interval 25–282 (LKIGIVGLPN…MPPDEAAKYC (258 aa)). ATP contacts are provided by residues 34 to 39 (NVGKST), 56 to 60 (FCTID), and 94 to 97 (DIAG). 34–39 (NVGKST) provides a ligand contact to GTP. Mg(2+) is bound by residues S38 and T58. GTP-binding residues include F129 and N230. Residues 230 to 231 (NM), M231, and 263 to 265 (SCA) contribute to the ATP site. Residue 263-265 (SCA) coordinates GTP. Positions 303 to 386 (HLIYFFTAGP…QDGDIIFFKF (84 aa)) constitute a TGS domain.

The protein belongs to the TRAFAC class OBG-HflX-like GTPase superfamily. OBG GTPase family. YchF/OLA1 subfamily. Monomer (Potential). Interacts with GAP1. It depends on Mg(2+) as a cofactor.

It localises to the cell membrane. Its subcellular location is the cytoplasm. The protein localises to the cytosol. With respect to regulation, activated by GAP1. Functionally, hydrolyzes ATP, and can also hydrolyze GTP with lower efficiency. Has lower affinity for GTP (Potential). Exhibits GTPase activity. Exhibits similar binding affinities and hydrolytic activities toward both GTP and ATP. Binds to the 26 S ribosomal RNA in vitro, but not to the 5.8 S or 18 S rRNA. Confers sensitivity to salinity stress by suppressing the anti-oxidation enzymatic activities and increasing lipid peroxidation thus leading to the accumulation of reactive oxygen species (ROS). This chain is Obg-like ATPase 1, found in Oryza sativa subsp. japonica (Rice).